Here is an 82-residue protein sequence, read N- to C-terminus: Small ribosomal subunit protein uS17 (82 aa).

Belongs to the universal ribosomal protein uS17 family. In terms of assembly, part of the 30S ribosomal subunit.

Functionally, one of the primary rRNA binding proteins, it binds specifically to the 5'-end of 16S ribosomal RNA. This chain is Small ribosomal subunit protein uS17, found in Rickettsia rickettsii (strain Iowa).